The following is a 630-amino-acid chain: Multidrug transporter TPO3 (630 aa).

The segment covering 1-35 (MVDQESLVSFSSETSQSINSDIDIESQQQPRQYIP) has biased composition (polar residues). 2 disordered regions span residues 1–46 (MVDQ…KERL) and 107–157 (TSTA…NQQP). The span at 37–46 (NEKDGNKERL) shows a compositional bias: basic and acidic residues. Residues 125 to 137 (RRSQNIAASSNSS) are compositionally biased toward low complexity. Asparagine 135 carries an N-linked (GlcNAc...) asparagine glycan. 12 consecutive transmembrane segments (helical) span residues 190–210 (ILSCLVICVAYGSACITGGLF), 222–242 (AAILSCSLMVIGFSLGPLIWS), 252–272 (LAYFISMGLYTIFNIPCALSP), 282–302 (FLCGVFSSSGLCLVGGSIADM), 312–332 (IAFFAFAPYTGPIIGPLVNGF), 342–362 (LIFWINMAFAGVMWIIVAFIP), 423–443 (FYVCLIYSLLYAFFFAFPVVF), 453–473 (LIGLMFIPILIGATMALATTF), 494–514 (LFGAMIGAPFAAAALWILGAT), 519–539 (IIWVGPASSGLAFGYGMVLIY), 553–575 (YASSALATKVFLRSAGGAAFPLF), and 587–607 (WASWLLAFISTAMILLPFGFY).

Belongs to the major facilitator superfamily. DHA1 family. Polyamines/proton antiporter (TC 2.A.1.2.16) subfamily.

The protein resides in the cell membrane. Its function is as follows. Cell membrane polyamine/proton antiporter, involved in the detoxification of excess polyamines in the cytoplasm. Involved in the resistance to the imidazole antifungal drugs tioconazole, miconazole, clotrimazole and ketoconazole; to the triazole fluconazole; but not to the antifungals flucytosine or amphotericin B. Plays a role in spermine homeostasis, but spermine accumulation in response to clotrimazole is independent of TPO3. The polypeptide is Multidrug transporter TPO3 (Candida glabrata (strain ATCC 2001 / BCRC 20586 / JCM 3761 / NBRC 0622 / NRRL Y-65 / CBS 138) (Yeast)).